The chain runs to 786 residues: Mitochondrial intermediate peptidase (786 aa).

A mitochondrion-targeting transit peptide spans M1–L29. A Zn(2+)-binding site is contributed by H567. E568 is an active-site residue. Zn(2+) is bound by residues H571 and H574.

This sequence belongs to the peptidase M3 family. Zn(2+) serves as cofactor.

Its subcellular location is the mitochondrion matrix. The enzyme catalyses Release of an N-terminal octapeptide as second stage of processing of some proteins imported into the mitochondrion.. Cleaves proteins, imported into the mitochondrion, to their mature size. While most mitochondrial precursor proteins are processed to the mature form in one step by mitochondrial processing peptidase (MPP), the sequential cleavage by MIP of an octapeptide after initial processing by MPP is a required step for a subgroup of nuclear-encoded precursor proteins destined for the matrix or the inner membrane. In Meyerozyma guilliermondii (strain ATCC 6260 / CBS 566 / DSM 6381 / JCM 1539 / NBRC 10279 / NRRL Y-324) (Yeast), this protein is Mitochondrial intermediate peptidase (OCT1).